Reading from the N-terminus, the 703-residue chain is DnaJ homolog subfamily C member 14 (703 aa).

Disordered stretches follow at residues 1–150 and 164–229; these read MAQK…DGSS and EDEE…RKRS. Over residues 17–28 the composition is skewed to low complexity; it reads SGGSSLITSGSS. Residues 75–84 are compositionally biased toward pro residues; the sequence is HGPPRGPGPP. Acidic residues-rich tracts occupy residues 89–102 and 164–176; these read YPDESETCSEESGV and EDEELEEEYDDEE. The segment covering 193–202 has biased composition (basic residues); it reads PPSRRQRHRF. Basic and acidic residues predominate over residues 203-218; sequence LTKEDVRDSGRRDPKA. Basic residues predominate over residues 219–228; it reads PGRHRLARKR. 3 helical membrane-spanning segments follow: residues 254–274, 305–325, and 327–347; these read WWLIELLVLVGEYVETCGYLI, VMFQFLSQSFFSVAGLFIRLL, and VVGAFLLLALALFLGCLQLGW. The J domain maps to 444–508; sequence NPFHVLGVEA…ERRKEYEMKR (65 aa). Disordered stretches follow at residues 622-643 and 659-703; these read FGSRVPGTSGRQRATPESPPAD and MSNG…PFQR. Polar residues predominate over residues 673–684; the sequence is GTTSTSRPNSSV. Residues 691-703 are compositionally biased toward basic residues; it reads PKRRKKVRRPFQR.

In terms of assembly, interacts with the FxxxFxxxF motif of DRD1 via its C-terminal domain. Detected in heart, brain, lung, liver, skeletal muscle, kidney and testis.

The protein localises to the endoplasmic reticulum membrane. Functionally, regulates the export of target proteins, such as DRD1, from the endoplasmic reticulum to the cell surface. The chain is DnaJ homolog subfamily C member 14 (Dnajc14) from Rattus norvegicus (Rat).